An 84-amino-acid polypeptide reads, in one-letter code: Small ribosomal subunit protein uS17 (84 aa).

Belongs to the universal ribosomal protein uS17 family. As to quaternary structure, part of the 30S ribosomal subunit.

One of the primary rRNA binding proteins, it binds specifically to the 5'-end of 16S ribosomal RNA. The protein is Small ribosomal subunit protein uS17 of Clostridium botulinum (strain 657 / Type Ba4).